A 556-amino-acid polypeptide reads, in one-letter code: Potassium-transporting ATPase potassium-binding subunit (556 aa).

The next 12 helical transmembrane spans lie at 3-23, 57-77, 129-149, 172-192, 247-267, 278-298, 319-339, 346-366, 371-391, 408-428, 486-506, and 516-536; these read AHGV…TPIL, AAYA…LYAL, GLTV…VALM, LGLL…QGVP, LVNL…TNTF, WALL…AWWA, LGVA…CGAV, LLPL…VVVG, GLYG…LMVG, LAVI…GLAI, FVVM…MAVP, and GWLF…LTYF.

The protein belongs to the KdpA family. The system is composed of three essential subunits: KdpA, KdpB and KdpC.

Its subcellular location is the cell inner membrane. Its function is as follows. Part of the high-affinity ATP-driven potassium transport (or Kdp) system, which catalyzes the hydrolysis of ATP coupled with the electrogenic transport of potassium into the cytoplasm. This subunit binds the periplasmic potassium ions and delivers the ions to the membrane domain of KdpB through an intramembrane tunnel. This Paramagnetospirillum magneticum (strain ATCC 700264 / AMB-1) (Magnetospirillum magneticum) protein is Potassium-transporting ATPase potassium-binding subunit.